The sequence spans 162 residues: uncharacterized protein (162 aa).

A signal peptide spans 1 to 21 (MEGIMKKFFALMTLIAGISFS). The stretch at 32–118 (VIRESKFIAK…KKAELEKMVF (87 aa)) forms a coiled coil.

This sequence belongs to the Skp family.

This is an uncharacterized protein from Aquifex aeolicus (strain VF5).